We begin with the raw amino-acid sequence, 349 residues long: MLHLTPLIFLSLAMAAAVGVWGVFTWNGGFDEMDGIVASHQSTGILGLQHCPDLDRGLMSMVAFNLPVVGRNPIFPAGRRFMVQFLANVAVIPVILNTEGARAEPGSLVRYSTTWGLFSQMATSAVMCPLYGFWFVRQSGAKQTEGGTLRPLPPNKWVVPSSVLIGYGIPALLSFDPFQWGLDLQIRGILAFTLYPLCISLTARLMRKVSKKRGRSLSPEWNSTISYVAVGVVGMVSHLWYLGTGLTGYPLSGDAVSSVAGPTEVGRAAQLVLLFLQIDYVITFAAMLLLAWHELTRHQLVRSWRAAGTLAVGWLFLGPGATLAAAWALREQWLSRPRGVRGEIKQKPK.

A run of 5 helical transmembrane segments spans residues 4–24 (LTPL…WGVF), 81–101 (FMVQ…TEGA), 116–136 (GLFS…FWFV), 158–178 (VVPS…FDPF), and 181–201 (GLDL…CISL). The N-linked (GlcNAc...) asparagine glycan is linked to Asn-222. The next 3 helical transmembrane spans lie at 228-248 (VAVG…GLTG), 271-291 (LVLL…LLLA), and 309-329 (TLAV…AWAL).

This sequence belongs to the membrane-bound ascI terpene cyclase family.

It is found in the membrane. The protein operates within antifungal biosynthesis. Cyclase; part of the gene cluster that mediates the biosynthesis of the tetrahydropyranyl antifungal agent restricticin that acts as an inhibitor of CYP51 and blocks the ergosterol biosynthesis. The highly reducing polyketide synthase rstn3, the short chain dehydrogenase rstn4, the cyclase rstn5, the FAD-dependent monooxygenase rstn6 and the enoylreductase rstn7 are required to generate the first stable intermediate desmethylrestrictinol. Rstn3 with rstn7 biosynthesize the first polyketide chain intermediate that is reduced by rstn4, followed by epoxidation by rstn6 before 6-endo cyclization via epoxide opening by rstn5 leads to desmethylrestrictinol. The methyltransferase rstn1 then catalyzes the C4 O-methylation of desmethylrestrictinol to produce restrictinol, and the nonribosomal peptide synthetase rstn8 catalyzes the C3 esterification of restrictinol with glycine that leads to restricticin. The chain is Terpene cyclase rstn5 from Aspergillus nomiae NRRL (strain ATCC 15546 / NRRL 13137 / CBS 260.88 / M93).